The chain runs to 346 residues: B3 domain-containing protein At5g60142 (346 aa).

The segment at residues 13–109 (PKFFKVYLPD…CFNFCIYGRA (97 aa)) is a DNA-binding region (TF-B3). Disordered regions lie at residues 158–179 (QDYNEEDTSSEDITALDDADND) and 192–243 (TSSE…HDRQ). Positions 192–217 (TSSEDIIVIDDDDDDDDQDYGDDDHA) are enriched in acidic residues. Over residues 218–229 (DVEKERWRGVKT) the composition is skewed to basic and acidic residues.

The protein localises to the nucleus. This is B3 domain-containing protein At5g60142 from Arabidopsis thaliana (Mouse-ear cress).